Consider the following 230-residue polypeptide: MKYNSVIRKAIFLRRPNRFQAYVVLDDEELLVHVPNTGRCREILKEGCTVLLRKGTTPNRKTPYDLIAAYKGEILINIDSQIPNKVVEEALINKKIEKLVNFNNISREKTFGNSRFDFKLQDDNENIYFLEVKGVTLEENGETRFPDAPTERGKKHILELIEIKKLGMGAGIIFLIQIDNVNKFSPNDETDPKFGEALRLAKKEGVDIFAYNCKVTEEEIELLNPVEIVL.

This sequence belongs to the SfsA family.

The protein is Sugar fermentation stimulation protein homolog of Clostridium perfringens (strain SM101 / Type A).